Consider the following 122-residue polypeptide: Large ribosomal subunit protein uL14 (122 aa).

This sequence belongs to the universal ribosomal protein uL14 family. In terms of assembly, part of the 50S ribosomal subunit. Forms a cluster with proteins L3 and L19. In the 70S ribosome, L14 and L19 interact and together make contacts with the 16S rRNA in bridges B5 and B8.

Functionally, binds to 23S rRNA. Forms part of two intersubunit bridges in the 70S ribosome. The sequence is that of Large ribosomal subunit protein uL14 from Rickettsia canadensis (strain McKiel).